We begin with the raw amino-acid sequence, 96 residues long: Large ribosomal subunit protein eL43 (96 aa).

Residues 41-62 (CPVCAFPKLKRAGTSIWVCEKC) form a C4-type zinc finger.

The protein belongs to the eukaryotic ribosomal protein eL43 family. The cofactor is Zn(2+).

In Methanococcus maripaludis (strain C5 / ATCC BAA-1333), this protein is Large ribosomal subunit protein eL43.